A 182-amino-acid chain; its full sequence is Ribulose bisphosphate carboxylase small subunit, chloroplastic (182 aa).

Residues 1-58 (MASSMISSATVATVSRATPAQATMVAPFTGLKSTAAFPATRKSNNDITSLASNGGRVQ) constitute a chloroplast transit peptide.

It belongs to the RuBisCO small chain family. As to quaternary structure, heterohexadecamer of 8 large and 8 small subunits.

The protein localises to the plastid. It localises to the chloroplast. Its function is as follows. RuBisCO catalyzes two reactions: the carboxylation of D-ribulose 1,5-bisphosphate, the primary event in carbon dioxide fixation, as well as the oxidative fragmentation of the pentose substrate. Both reactions occur simultaneously and in competition at the same active site. Although the small subunit is not catalytic it is essential for maximal activity. In Fagus crenata (Japanese beech), this protein is Ribulose bisphosphate carboxylase small subunit, chloroplastic.